We begin with the raw amino-acid sequence, 259 residues long: MAPITDDVVAGLKSTIGKLEARIEDLESRLGGEPKPKSIAEHMRIILMGPPGAGKGTQAPKIKEKYCVCHLATGDMLRSQVAKKTDLGREAKKIMDQGGLVSDEIMVNMIKSELENNAECKNGFILDGFPRTVAQAERLDEMLVARNQKLQHAIELKIDDALLVARITGRLVHPASGRSYHKIFNPPKEAMKDDITGEPLVQRSDDNAEALKKRLVTYHAQTAPVCDYYKKTGIWRGIDASQEPGQVWKSLLGVFNNKN.

52–57 contacts ATP; sequence GAGKGT. Residues 72 to 101 form an NMP region; it reads ATGDMLRSQVAKKTDLGREAKKIMDQGGLV. AMP contacts are provided by residues T73, R78, 99–101, 128–131, and Q135; these read GLV and GFPR. The interval 169–206 is LID; the sequence is GRLVHPASGRSYHKIFNPPKEAMKDDITGEPLVQRSDD. ATP contacts are provided by residues R170 and 179–180; that span reads SY. 2 residues coordinate AMP: R203 and R214. Q242 is an ATP binding site.

The protein belongs to the adenylate kinase family. AK2 subfamily. Monomer.

The protein localises to the cytoplasm. It localises to the mitochondrion intermembrane space. It catalyses the reaction AMP + ATP = 2 ADP. In terms of biological role, catalyzes the reversible transfer of the terminal phosphate group between ATP and AMP. Plays an important role in cellular energy homeostasis and in adenine nucleotide metabolism. Adenylate kinase activity is critical for regulation of the phosphate utilization and the AMP de novo biosynthesis pathways. The polypeptide is Adenylate kinase (adk1) (Emericella nidulans (strain FGSC A4 / ATCC 38163 / CBS 112.46 / NRRL 194 / M139) (Aspergillus nidulans)).